A 394-amino-acid polypeptide reads, in one-letter code: NAD(P)H-quinone oxidoreductase subunit H (394 aa).

The protein belongs to the complex I 49 kDa subunit family. NDH-1 can be composed of about 15 different subunits; different subcomplexes with different compositions have been identified which probably have different functions.

It localises to the cellular thylakoid membrane. The enzyme catalyses a plastoquinone + NADH + (n+1) H(+)(in) = a plastoquinol + NAD(+) + n H(+)(out). It catalyses the reaction a plastoquinone + NADPH + (n+1) H(+)(in) = a plastoquinol + NADP(+) + n H(+)(out). Functionally, NDH-1 shuttles electrons from an unknown electron donor, via FMN and iron-sulfur (Fe-S) centers, to quinones in the respiratory and/or the photosynthetic chain. The immediate electron acceptor for the enzyme in this species is believed to be plastoquinone. Couples the redox reaction to proton translocation, and thus conserves the redox energy in a proton gradient. Cyanobacterial NDH-1 also plays a role in inorganic carbon-concentration. The polypeptide is NAD(P)H-quinone oxidoreductase subunit H (Thermosynechococcus vestitus (strain NIES-2133 / IAM M-273 / BP-1)).